A 206-amino-acid polypeptide reads, in one-letter code: MSDSRQQLIALGAVFESAALVDKLARTGQISEAPLGCMLGSLLARNPASTLDVYGGDTLNLRDGFKALASALERKPGSLQREPLRYALAMLTLERQLDKRGDMLDLIGQRLDQVEQQVQHFGLVHENVIASFASIYQDTLSTFRQRIQVHGDMRHLQVSSNAARIRALLLAGIRSARLWRQLGGSRWQMVFSRRRLLNELYLLLRG.

The protein belongs to the HflD family.

The protein resides in the cytoplasm. It localises to the cell inner membrane. This Pseudomonas paraeruginosa (strain DSM 24068 / PA7) (Pseudomonas aeruginosa (strain PA7)) protein is High frequency lysogenization protein HflD homolog.